Consider the following 189-residue polypeptide: dCTP deaminase (189 aa).

DCTP is bound by residues 112-117 (KSTYAR), 136-138 (TLE), glutamine 157, tyrosine 171, and glutamine 181. Catalysis depends on glutamate 138, which acts as the Proton donor/acceptor.

Belongs to the dCTP deaminase family. As to quaternary structure, homotrimer.

The enzyme catalyses dCTP + H2O + H(+) = dUTP + NH4(+). It participates in pyrimidine metabolism; dUMP biosynthesis; dUMP from dCTP (dUTP route): step 1/2. In terms of biological role, catalyzes the deamination of dCTP to dUTP. This chain is dCTP deaminase, found in Xanthomonas oryzae pv. oryzae (strain MAFF 311018).